A 212-amino-acid polypeptide reads, in one-letter code: Ion-translocating oxidoreductase complex subunit G (212 aa).

Residues 9–29 (GLLLALFALLCTGLVAVVNQQ) form a helical membrane-spanning segment. Position 176 is an FMN phosphoryl threonine (T176).

This sequence belongs to the RnfG family. As to quaternary structure, the complex is composed of six subunits: RnfA, RnfB, RnfC, RnfD, RnfE and RnfG. Requires FMN as cofactor.

Its subcellular location is the cell inner membrane. Part of a membrane-bound complex that couples electron transfer with translocation of ions across the membrane. In Shewanella oneidensis (strain ATCC 700550 / JCM 31522 / CIP 106686 / LMG 19005 / NCIMB 14063 / MR-1), this protein is Ion-translocating oxidoreductase complex subunit G.